The following is a 129-amino-acid chain: Fluoride-specific ion channel FluC 1 (129 aa).

The next 4 membrane-spanning stretches (helical) occupy residues 9–29 (LSVGIFAFFGGGLRAYLNLIW), 33–53 (GTLTANIIGCFLLAFFTYFFV), 62–82 (LVTGLSTGFVGSFTTFSSFNL), and 98–118 (IYFFSSIFIGFLFAYLGMLVG). Positions 72 and 75 each coordinate Na(+).

Belongs to the fluoride channel Fluc/FEX (TC 1.A.43) family.

The protein localises to the cell membrane. It catalyses the reaction fluoride(in) = fluoride(out). Na(+) is not transported, but it plays an essential structural role and its presence is essential for fluoride channel function. Functionally, fluoride-specific ion channel. Important for reducing fluoride concentration in the cell, thus reducing its toxicity. The sequence is that of Fluoride-specific ion channel FluC 1 from Lactobacillus johnsonii (strain CNCM I-12250 / La1 / NCC 533).